A 531-amino-acid chain; its full sequence is Polyamine aminopropyltransferase 1 (531 aa).

The next 7 helical transmembrane spans lie at 27–47, 59–79, 96–116, 122–142, 160–180, 188–208, and 218–238; these read FLLL…ELAL, VLQT…GSLA, GVLA…FAWL, AMIV…PLLM, MFAV…LFLL, GALV…VFIF, and AGLL…YVLA. A spermidine synthase region spans residues 205 to 476; it reads VFIFRRQTGR…VLARPGTEAP (272 aa). A PABS domain is found at 233-471; that stretch reads TTYVLADDLE…GNWGFVLARP (239 aa). Position 263 (glutamine 263) interacts with S-methyl-5'-thioadenosine. Spermidine is bound by residues histidine 298 and aspartate 320. S-methyl-5'-thioadenosine contacts are provided by residues glutamate 340 and 374–375; that span reads DA. The active-site Proton acceptor is aspartate 392.

The protein belongs to the spermidine/spermine synthase family. As to quaternary structure, homodimer or homotetramer.

The protein resides in the cell membrane. The catalysed reaction is S-adenosyl 3-(methylsulfanyl)propylamine + putrescine = S-methyl-5'-thioadenosine + spermidine + H(+). Its pathway is amine and polyamine biosynthesis; spermidine biosynthesis; spermidine from putrescine: step 1/1. In terms of biological role, catalyzes the irreversible transfer of a propylamine group from the amino donor S-adenosylmethioninamine (decarboxy-AdoMet) to putrescine (1,4-diaminobutane) to yield spermidine. The polypeptide is Polyamine aminopropyltransferase 1 (Streptomyces coelicolor (strain ATCC BAA-471 / A3(2) / M145)).